The following is a 348-amino-acid chain: GTP 3',8-cyclase (348 aa).

A Radical SAM core domain is found at 24-248 (PFGRAVTYLR…TDIDYQTGGP (225 aa)). Arg33 is a binding site for GTP. Positions 40 and 44 each coordinate [4Fe-4S] cluster. Tyr46 is a binding site for S-adenosyl-L-methionine. Cys47 lines the [4Fe-4S] cluster pocket. A GTP-binding site is contributed by Arg82. Gly86 serves as a coordination point for S-adenosyl-L-methionine. Thr115 is a GTP binding site. Ser139 lines the S-adenosyl-L-methionine pocket. Lys175 contributes to the GTP binding site. S-adenosyl-L-methionine is bound at residue Met209. [4Fe-4S] cluster is bound by residues Cys272 and Cys275. 277–279 (RVR) provides a ligand contact to GTP. Residue Cys289 coordinates [4Fe-4S] cluster.

It belongs to the radical SAM superfamily. MoaA family. Monomer and homodimer. [4Fe-4S] cluster is required as a cofactor.

The enzyme catalyses GTP + AH2 + S-adenosyl-L-methionine = (8S)-3',8-cyclo-7,8-dihydroguanosine 5'-triphosphate + 5'-deoxyadenosine + L-methionine + A + H(+). It functions in the pathway cofactor biosynthesis; molybdopterin biosynthesis. Its function is as follows. Catalyzes the cyclization of GTP to (8S)-3',8-cyclo-7,8-dihydroguanosine 5'-triphosphate. In Rhizobium etli (strain ATCC 51251 / DSM 11541 / JCM 21823 / NBRC 15573 / CFN 42), this protein is GTP 3',8-cyclase.